Here is a 115-residue protein sequence, read N- to C-terminus: Large ribosomal subunit protein bL21 (115 aa).

This sequence belongs to the bacterial ribosomal protein bL21 family. Part of the 50S ribosomal subunit. Contacts protein L20.

This protein binds to 23S rRNA in the presence of protein L20. This Coxiella burnetii (strain Dugway 5J108-111) protein is Large ribosomal subunit protein bL21.